Reading from the N-terminus, the 248-residue chain is Probable transcriptional regulatory protein RPC_4807 (248 aa).

Residues 1 to 21 (MAGHSQFKNIMHRKGRQDAQK) are disordered.

It belongs to the TACO1 family.

Its subcellular location is the cytoplasm. The sequence is that of Probable transcriptional regulatory protein RPC_4807 from Rhodopseudomonas palustris (strain BisB18).